A 132-amino-acid polypeptide reads, in one-letter code: Small ribosomal subunit protein eS24 (132 aa).

Positions Arg-90–Lys-100 are enriched in basic and acidic residues. The tract at residues Arg-90–Asp-132 is disordered. Residues Lys-101–Lys-121 show a composition bias toward basic residues.

It belongs to the eukaryotic ribosomal protein eS24 family. As to quaternary structure, component of the small ribosomal subunit.

It is found in the cytoplasm. Component of the small ribosomal subunit. The ribosome is a large ribonucleoprotein complex responsible for the synthesis of proteins in the cell. Required for processing of pre-rRNA and maturation of 40S ribosomal subunits. This chain is Small ribosomal subunit protein eS24 (rps24), found in Takifugu rubripes (Japanese pufferfish).